A 564-amino-acid polypeptide reads, in one-letter code: Sulfite reductase [NADPH] hemoprotein beta-component 2 (564 aa).

The [4Fe-4S] cluster site is built by Cys426, Cys432, Cys471, and Cys475. Cys475 serves as a coordination point for siroheme.

The protein belongs to the nitrite and sulfite reductase 4Fe-4S domain family. Alpha(8)-beta(8). The alpha component is a flavoprotein, the beta component is a hemoprotein. The cofactor is siroheme. Requires [4Fe-4S] cluster as cofactor.

It catalyses the reaction hydrogen sulfide + 3 NADP(+) + 3 H2O = sulfite + 3 NADPH + 4 H(+). It functions in the pathway sulfur metabolism; hydrogen sulfide biosynthesis; hydrogen sulfide from sulfite (NADPH route): step 1/1. Its function is as follows. Component of the sulfite reductase complex that catalyzes the 6-electron reduction of sulfite to sulfide. This is one of several activities required for the biosynthesis of L-cysteine from sulfate. In Klebsiella pneumoniae (strain 342), this protein is Sulfite reductase [NADPH] hemoprotein beta-component 2.